Reading from the N-terminus, the 236-residue chain is UPF0257 lipoprotein YnfC (236 aa).

An N-terminal signal peptide occupies residues 1–16; it reads MKKPLLLTLLCMILAG. A lipid anchor (N-palmitoyl cysteine) is attached at cysteine 17. A lipid anchor (S-diacylglycerol cysteine) is attached at cysteine 17.

This sequence belongs to the UPF0257 family.

It is found in the cell membrane. The polypeptide is UPF0257 lipoprotein YnfC (Salmonella typhi).